The primary structure comprises 300 residues: Urease accessory protein UreD (300 aa).

The protein belongs to the UreD family. UreD, UreF and UreG form a complex that acts as a GTP-hydrolysis-dependent molecular chaperone, activating the urease apoprotein by helping to assemble the nickel containing metallocenter of UreC. The UreE protein probably delivers the nickel.

The protein localises to the cytoplasm. Functionally, required for maturation of urease via the functional incorporation of the urease nickel metallocenter. The polypeptide is Urease accessory protein UreD (Prochlorococcus marinus (strain MIT 9312)).